The primary structure comprises 158 residues: Endoribonuclease YbeY (158 aa).

Residues His124, His128, and His134 each contribute to the Zn(2+) site.

The protein belongs to the endoribonuclease YbeY family. Requires Zn(2+) as cofactor.

The protein localises to the cytoplasm. Functionally, single strand-specific metallo-endoribonuclease involved in late-stage 70S ribosome quality control and in maturation of the 3' terminus of the 16S rRNA. This chain is Endoribonuclease YbeY, found in Caldanaerobacter subterraneus subsp. tengcongensis (strain DSM 15242 / JCM 11007 / NBRC 100824 / MB4) (Thermoanaerobacter tengcongensis).